Reading from the N-terminus, the 253-residue chain is MANLGCWMLVLFVATWSDLGLCKKRPKPGGWNTGGSRYPGQGSPGGNRYPPQGGGGWGQPHGGGWGQPHGGGWGQPHGGGWGQPHGGGWGQGGGTHSQWNKPSKPKTNMKHMAGAAAAGAVVGGLGGYMLGSAMSRPIIHFGSDYEDRYYRENMHRYPNQVYYRPMDEYSNQNNFVHDCVNITIKQHTVTTTTKGENFTETDVKMMERVVEQMCITQYERESQAYYQRGSSMVLFSSPPVILLISFLIFLIVG.

Positions 1–22 (MANLGCWMLVLFVATWSDLGLC) are cleaved as a signal peptide. The interval 23–38 (KKRPKPGGWNTGGSRY) is interaction with ADGRG6. The segment at 23 to 230 (KKRPKPGGWN…ESQAYYQRGS (208 aa)) is interaction with GRB2, ERI3 and SYN1. Residues 26–108 (PKPGGWNTGG…WNKPSKPKTN (83 aa)) are disordered. 5 repeat units span residues 51–59 (PQGGGGWGQ), 60–67 (PHGGGWGQ), 68–75 (PHGGGWGQ), 76–83 (PHGGGWGQ), and 84–91 (PHGGGWGQ). Positions 51-91 (PQGGGGWGQPHGGGWGQPHGGGWGQPHGGGWGQPHGGGWGQ) are 5 X 8 AA tandem repeats of P-H-G-G-G-W-G-Q. A compositionally biased stretch (gly residues) spans 52-95 (QGGGGWGQPHGGGWGQPHGGGWGQPHGGGWGQPHGGGWGQGGGT). Residues H61, G62, G63, H69, G70, G71, H77, G78, G79, H85, G86, and G87 each coordinate Cu(2+). C179 and C214 are disulfide-bonded. N-linked (GlcNAc...) asparagine glycosylation is found at N181 and N197. S230 carries GPI-anchor amidated serine lipidation. The propeptide at 231 to 253 (SMVLFSSPPVILLISFLIFLIVG) is removed in mature form.

The protein belongs to the prion family. In terms of assembly, monomer and homodimer. Has a tendency to aggregate into amyloid fibrils containing a cross-beta spine, formed by a steric zipper of superposed beta-strands. Soluble oligomers may represent an intermediate stage on the path to fibril formation. Copper binding may promote oligomerization. Interacts with GRB2, APP, ERI3/PRNPIP and SYN1. Mislocalized cytosolically exposed PrP interacts with MGRN1; this interaction alters MGRN1 subcellular location and causes lysosomal enlargement. Interacts with KIAA1191. Interacts with ADGRG6. Post-translationally, the glycosylation pattern (the amount of mono-, di- and non-glycosylated forms or glycoforms) seems to differ in normal and CJD prion.

It is found in the cell membrane. The protein localises to the golgi apparatus. Functionally, its primary physiological function is unclear. May play a role in neuronal development and synaptic plasticity. May be required for neuronal myelin sheath maintenance. May promote myelin homeostasis through acting as an agonist for ADGRG6 receptor. May play a role in iron uptake and iron homeostasis. Soluble oligomers are toxic to cultured neuroblastoma cells and induce apoptosis (in vitro). Association with GPC1 (via its heparan sulfate chains) targets PRNP to lipid rafts. Also provides Cu(2+) or Zn(2+) for the ascorbate-mediated GPC1 deaminase degradation of its heparan sulfate side chains. The sequence is that of Major prion protein (PRNP) from Homo sapiens (Human).